The following is a 242-amino-acid chain: Uroporphyrinogen-III C-methyltransferase (242 aa).

S-adenosyl-L-homocysteine contacts are provided by residues proline 12, 88 to 90 (GGD), 118 to 119 (TS), and methionine 170.

It belongs to the precorrin methyltransferase family. As to quaternary structure, homodimer.

The enzyme catalyses uroporphyrinogen III + 2 S-adenosyl-L-methionine = precorrin-2 + 2 S-adenosyl-L-homocysteine + H(+). Its pathway is cofactor biosynthesis; adenosylcobalamin biosynthesis; precorrin-2 from uroporphyrinogen III: step 1/1. Its function is as follows. Catalyzes the two successive C-2 and C-7 methylation reactions involved in the conversion of uroporphyrinogen III to precorrin-2 via the intermediate formation of precorrin-1. It is a step in the biosynthesis of both cobalamin (vitamin B12) and coenzyme F430. In Methanocaldococcus jannaschii (strain ATCC 43067 / DSM 2661 / JAL-1 / JCM 10045 / NBRC 100440) (Methanococcus jannaschii), this protein is Uroporphyrinogen-III C-methyltransferase (cobA).